Reading from the N-terminus, the 129-residue chain is Glycine cleavage system H protein (129 aa).

Positions 24-106 constitute a Lipoyl-binding domain; sequence SYTVGISEHA…FGDGWFFRVM (83 aa). Lysine 65 carries the N6-lipoyllysine modification.

The protein belongs to the GcvH family. As to quaternary structure, the glycine cleavage system is composed of four proteins: P, T, L and H. Requires (R)-lipoate as cofactor.

The glycine cleavage system catalyzes the degradation of glycine. The H protein shuttles the methylamine group of glycine from the P protein to the T protein. This chain is Glycine cleavage system H protein, found in Shewanella sediminis (strain HAW-EB3).